A 74-amino-acid chain; its full sequence is Small heat shock protein hspG10 (74 aa).

The sHSP domain maps to 31-74 (KTIIDILPSMDVTMTNDKLIIETELAGISKDHIEIDIKDSILTI).

It belongs to the small heat shock protein (HSP20) family.

The polypeptide is Small heat shock protein hspG10 (hspG10) (Dictyostelium discoideum (Social amoeba)).